Consider the following 107-residue polypeptide: Transmembrane protein 213 (107 aa).

Positions 1–27 are cleaved as a signal peptide; it reads MQRLPAATRATLILSLAFASLHSACSA. Residues 28 to 70 lie on the Extracellular side of the membrane; that stretch reads EASSSNSSSLTAHHPDPGTLEQCLNVDFCPQAARCCRTGVDEY. Residues 71-91 form a helical membrane-spanning segment; that stretch reads GWIAAAVGWSLWFLTLILLCV. At 92-107 the chain is on the cytoplasmic side; sequence DKLMKLTPDEPKDLQA.

The protein resides in the membrane. This Homo sapiens (Human) protein is Transmembrane protein 213 (TMEM213).